Here is a 484-residue protein sequence, read N- to C-terminus: PTS system MurNAc-GlcNAc-specific EIIBC component (484 aa).

Residues 5-87 (QQLAERIIAA…AELSGVKLGD (83 aa)) enclose the PTS EIIB type-1 domain. Residue Cys27 is the Phosphocysteine intermediate; for EIIB activity of the active site. In terms of domain architecture, PTS EIIC type-1 spans 130 to 484 (KSIANIFIPL…AMRQTDLLGD (355 aa)). 10 helical membrane passes run 135-155 (IFIP…IAAV), 160-180 (MVAG…FNVI), 200-220 (FGAT…TGIA), 234-254 (LQPG…LSIV), 274-294 (IALL…AGFV), 305-325 (IISI…LPLV), 349-369 (LLPI…ALWV), 384-404 (ALPV…TLPL), 408-428 (FLTA…IGHI), and 450-470 (LGYI…TYLF).

It is found in the cell membrane. It carries out the reaction N-acetyl-beta-D-muramate-(1-&gt;4)-N-acetyl-D-glucosamine(out) + N(pros)-phospho-L-histidyl-[protein] = 6-phospho-N-acetyl-beta-D-muramate-(1-&gt;4)-N-acetyl-D-glucosamine(in) + L-histidyl-[protein]. The protein operates within cell wall biogenesis; peptidoglycan recycling. Functionally, the phosphoenolpyruvate-dependent sugar phosphotransferase system (sugar PTS), a major carbohydrate active transport system, catalyzes the phosphorylation of incoming sugar substrates concomitantly with their translocation across the cell membrane. This system is involved in the uptake and phosphorylation of MurNAc-GlcNAc, the principle peptidoglycan turnover product of S.aureus, yielding cytoplasmic MurNAc 6P-GlcNAc. This Staphylococcus aureus (strain bovine RF122 / ET3-1) protein is PTS system MurNAc-GlcNAc-specific EIIBC component.